A 205-amino-acid polypeptide reads, in one-letter code: Holliday junction branch migration complex subunit RuvA (205 aa).

Residues 1-64 (MIGKLKGVID…EDQIKLFGFR (64 aa)) form a domain I region. A domain II region spans residues 65–143 (SDIEREWFRL…AFANVDPAVV (79 aa)). The interval 144–154 (HLAGAVDDDRA) is flexible linker. The tract at residues 154-205 (APRPVKDAISALVNLGYGQPQAAAAIASVARDAGEGAETAQLIRLGLKELAK) is domain III.

It belongs to the RuvA family. In terms of assembly, homotetramer. Forms an RuvA(8)-RuvB(12)-Holliday junction (HJ) complex. HJ DNA is sandwiched between 2 RuvA tetramers; dsDNA enters through RuvA and exits via RuvB. An RuvB hexamer assembles on each DNA strand where it exits the tetramer. Each RuvB hexamer is contacted by two RuvA subunits (via domain III) on 2 adjacent RuvB subunits; this complex drives branch migration. In the full resolvosome a probable DNA-RuvA(4)-RuvB(12)-RuvC(2) complex forms which resolves the HJ.

It is found in the cytoplasm. In terms of biological role, the RuvA-RuvB-RuvC complex processes Holliday junction (HJ) DNA during genetic recombination and DNA repair, while the RuvA-RuvB complex plays an important role in the rescue of blocked DNA replication forks via replication fork reversal (RFR). RuvA specifically binds to HJ cruciform DNA, conferring on it an open structure. The RuvB hexamer acts as an ATP-dependent pump, pulling dsDNA into and through the RuvAB complex. HJ branch migration allows RuvC to scan DNA until it finds its consensus sequence, where it cleaves and resolves the cruciform DNA. This is Holliday junction branch migration complex subunit RuvA from Afipia carboxidovorans (strain ATCC 49405 / DSM 1227 / KCTC 32145 / OM5) (Oligotropha carboxidovorans).